The sequence spans 735 residues: Wall-associated receptor kinase 1 (735 aa).

An N-terminal signal peptide occupies residues 1–24 (MKVQEGLFLVAIFFSLACTQLVKG). Topologically, residues 25–331 (QHQPGENCQN…TTTMSCKRKE (307 aa)) are extracellular. 9 N-linked (GlcNAc...) asparagine glycosylation sites follow: asparagine 38, asparagine 56, asparagine 80, asparagine 90, asparagine 113, asparagine 140, asparagine 209, asparagine 235, and asparagine 250. The interval 67 to 254 (RPHVLSDIEV…SICGGNSTCL (188 aa)) is polygalacturonic acid-binding. One can recognise an EGF-like 1 domain in the interval 234 to 281 (GNQTCEQVGSTSICGGNSTCLDSTPRNGYICRCNEGFDGNPYLSAGCQ). Cystine bridges form between cysteine 238–cysteine 253, cysteine 247–cysteine 264, cysteine 266–cysteine 280, cysteine 286–cysteine 303, cysteine 297–cysteine 312, and cysteine 314–cysteine 327. An EGF-like 2; calcium-binding domain is found at 282–328 (DVNECTTSSTIHRHNCSDPKTCRNKVGGFYCKCQSGYRLDTTTMSCK). Residue asparagine 296 is glycosylated (N-linked (GlcNAc...) asparagine). Residues 332–352 (FAWTTILLVTTIGFLVILLGV) traverse the membrane as a helical segment. Residues 353–735 (ACIQQRMKHL…VAILDIETGR (383 aa)) lie on the Cytoplasmic side of the membrane. At threonine 398 the chain carries Phosphothreonine. The Protein kinase domain occupies 409 to 692 (YAESRILGQG…RVEKTKHKWS (284 aa)). ATP is bound by residues 415–423 (LGQGGQGTV) and lysine 437. The residue at position 482 (tyrosine 482) is a Phosphotyrosine. The active-site Proton acceptor is the aspartate 534. Residues threonine 568 and threonine 573 each carry the phosphothreonine modification. A Phosphotyrosine modification is found at tyrosine 581.

It belongs to the protein kinase superfamily. Ser/Thr protein kinase family. In terms of assembly, interacts with the glycine-rich proteins GRP3 and GRP3S, and the type 2C protein phosphatase KAPP. Component of a 500 kDa complex, composed of WAK1, GRP3 and KAPP. Interacts with the oxygen-evolving enhancer protein 2 (OEE2). Predominantly expressed in green tissues such as stems and leaves. Detected at organ junctions.

It is found in the membrane. It carries out the reaction L-seryl-[protein] + ATP = O-phospho-L-seryl-[protein] + ADP + H(+). The catalysed reaction is L-threonyl-[protein] + ATP = O-phospho-L-threonyl-[protein] + ADP + H(+). In terms of biological role, serine/threonine-protein kinase that may function as a signaling receptor of extracellular matrix component. Binding to pectin may have significance in the control of cell expansion, morphogenesis and development. Required during plant's response to pathogen infection and in plant defense against heavy metal toxicity. Phosphorylates the oxygen-evolving enhancer protein 2 (OEE2) in an GRP-3-dependent manner. In Arabidopsis thaliana (Mouse-ear cress), this protein is Wall-associated receptor kinase 1 (WAK1).